An 83-amino-acid chain; its full sequence is Urotensin-2 (83 aa).

A propeptide spanning residues 49–71 (EVLLEKQSLLNPFSRVFGIRKQF) is cleaved from the precursor. Cysteines 77 and 82 form a disulfide.

It belongs to the urotensin-2 family.

The protein resides in the secreted. In terms of biological role, urotensin is found in the teleost caudal neurosecretory system. It has a suggested role in osmoregulation and as a corticotropin-releasing factor. The non-hormonal portion of this precursor may be a urotensin binding protein, urophysin. The sequence is that of Urotensin-2 from Platichthys flesus (European flounder).